Consider the following 401-residue polypeptide: ATP-dependent RNA helicase FAL1 (401 aa).

A Q motif motif is present at residues 27–55 (PTFESMSLKENLLRGIYAYGYESPSAVQS). In terms of domain architecture, Helicase ATP-binding spans 58-228 (IVQVCKGRDT…TKFMTDPVRI (171 aa)). 71–78 (AQSGTGKT) lines the ATP pocket. Positions 176–179 (DEAD) match the DEAD box motif. One can recognise a Helicase C-terminal domain in the interval 239-400 (GLKQYFIAVE…EMPMNVADLI (162 aa)).

The protein belongs to the DEAD box helicase family. DDX48/FAL1 subfamily.

The protein localises to the nucleus. It is found in the nucleolus. It carries out the reaction ATP + H2O = ADP + phosphate + H(+). ATP-dependent RNA helicase involved in 40S ribosomal subunit biogenesis. Required for the processing and cleavage of 35S pre-rRNA at sites A0, A1, and A2, leading to mature 18S rRNA. This is ATP-dependent RNA helicase FAL1 (FAL1) from Gibberella zeae (strain ATCC MYA-4620 / CBS 123657 / FGSC 9075 / NRRL 31084 / PH-1) (Wheat head blight fungus).